The primary structure comprises 445 residues: Putrescine hydroxycinnamoyltransferase 1 (445 aa).

Residues H154 and D388 each act as proton acceptor in the active site.

Belongs to the plant acyltransferase family. Expressed in leaves.

Its function is as follows. Hydroxycinnamoyl transferase that catalyzes the transfer of an acyl from p-coumaryol-CoA to putrescine, to produce coumaroyl putrescine. The chain is Putrescine hydroxycinnamoyltransferase 1 from Oryza sativa subsp. japonica (Rice).